A 768-amino-acid polypeptide reads, in one-letter code: WD repeat-containing protein 20 homolog (768 aa).

Residues 103–122 form a disordered region; the sequence is ESPEAVAPTSSTYEHHKNEP. WD repeat units follow at residues 224–264, 302–342, 345–384, and 454–497; these read IEKT…ASSN, IGEG…LLAV, SYFG…VVCR, and CSLA…LNQG. Residues 531-608 are disordered; sequence VSPGGAGVNA…VNSESSKKQN (78 aa). Over residues 539 to 553 the composition is skewed to polar residues; that stretch reads NASSDSQSITNNHTT. Low complexity predominate over residues 570-582; that stretch reads FSKFTSGSSSATS. Polar residues predominate over residues 595-608; it reads NGASVNSESSKKQN. One copy of the WD 5 repeat lies at 646-683; the sequence is VSHDRLTVLEFREDCVVTACQEGYICTWGRPGRYQPKR. Residues 684 to 749 are disordered; that stretch reads DCINSPGTAS…PNITSPSYRV (66 aa). Over residues 688 to 712 the composition is skewed to polar residues; sequence SPGTASPESGQKPSGSTSAMTSSYG. The segment covering 724-733 has biased composition (low complexity); sequence SRSSSTYSNS. Residues 734 to 749 show a composition bias toward polar residues; that stretch reads EQQLRSPNITSPSYRV.

As to quaternary structure, interacts with usp-46; the interaction increases the catalytic activity of usp-46 in the presence of wdr-48. As to expression, expressed in several neurons in the head and tail.

In terms of biological role, together with wdr-48, binds to and stimulates the activity of the deubiquitinating enzyme usp-46, leading to deubiquitination and stabilization of the glr-1 glutamate receptor. The protein is WD repeat-containing protein 20 homolog of Caenorhabditis elegans.